Consider the following 103-residue polypeptide: Small ribosomal subunit protein uS10 (103 aa).

The protein belongs to the universal ribosomal protein uS10 family. Part of the 30S ribosomal subunit.

Functionally, involved in the binding of tRNA to the ribosomes. The polypeptide is Small ribosomal subunit protein uS10 (Xylella fastidiosa (strain 9a5c)).